Consider the following 314-residue polypeptide: Acetyl-coenzyme A carboxylase carboxyl transferase subunit beta (314 aa).

Positions 37 to 307 constitute a CoA carboxyltransferase N-terminal domain; that stretch reads LWQKCPACDT…MSLPSIDSEA (271 aa). Positions 41, 44, 60, and 63 each coordinate Zn(2+). A C4-type zinc finger spans residues 41 to 63; it reads CPACDTLTYTKDLQQNWQVCPSC.

This sequence belongs to the AccD/PCCB family. In terms of assembly, acetyl-CoA carboxylase is a heterohexamer composed of biotin carboxyl carrier protein (AccB), biotin carboxylase (AccC) and two subunits each of ACCase subunit alpha (AccA) and ACCase subunit beta (AccD). It depends on Zn(2+) as a cofactor.

The protein resides in the cytoplasm. The catalysed reaction is N(6)-carboxybiotinyl-L-lysyl-[protein] + acetyl-CoA = N(6)-biotinyl-L-lysyl-[protein] + malonyl-CoA. Its pathway is lipid metabolism; malonyl-CoA biosynthesis; malonyl-CoA from acetyl-CoA: step 1/1. Its function is as follows. Component of the acetyl coenzyme A carboxylase (ACC) complex. Biotin carboxylase (BC) catalyzes the carboxylation of biotin on its carrier protein (BCCP) and then the CO(2) group is transferred by the transcarboxylase to acetyl-CoA to form malonyl-CoA. The chain is Acetyl-coenzyme A carboxylase carboxyl transferase subunit beta from Synechococcus sp. (strain JA-2-3B'a(2-13)) (Cyanobacteria bacterium Yellowstone B-Prime).